The following is a 36-amino-acid chain: Neurotoxin PRTx26An0C3 (36 aa).

3 disulfides stabilise this stretch: C3/C17, C10/C22, and C16/C34.

In terms of tissue distribution, expressed by the venom gland.

The protein localises to the secreted. Neurotoxin. Causes spastic paralysis and death in mice. Moderate inhibitor of L-type calcium channels (Cav1/CACNA1). The sequence is that of Neurotoxin PRTx26An0C3 from Phoneutria nigriventer (Brazilian armed spider).